The sequence spans 628 residues: Hemocyanin II (628 aa).

Thr1 carries the blocked amino end (Thr); partial modification. Cu cation is bound by residues His173, His177, His204, His324, His328, and His364. Asn449 carries N-linked (GlcNAc...) asparagine glycosylation. Disulfide bonds link Cys534-Cys576 and Cys536-Cys583.

The protein belongs to the tyrosinase family. Hemocyanin subfamily. As to quaternary structure, hexamer or a multiple thereof. In terms of tissue distribution, hemolymph.

The protein resides in the secreted. It localises to the extracellular space. Functionally, hemocyanins are copper-containing oxygen carriers occurring freely dissolved in the hemolymph of many mollusks and arthropods. The chain is Hemocyanin II from Limulus polyphemus (Atlantic horseshoe crab).